The chain runs to 313 residues: Olfactory receptor 51A2 (313 aa).

Topologically, residues 1-27 are extracellular; that stretch reads MSIINTSYVEITTFFLVGMPGLEYAHI. An N-linked (GlcNAc...) asparagine glycan is attached at N5. Residues 28–48 traverse the membrane as a helical segment; sequence WISIPICSMYLIAILGNGTIL. Topologically, residues 49-56 are cytoplasmic; it reads FIIKTEPS. Residues 57 to 77 traverse the membrane as a helical segment; the sequence is LHGPMYYFLSMLAMSDLGLSL. Residues 78 to 101 are Extracellular-facing; that stretch reads SSLPTVLSIFLFNAPETSSSACFA. Cysteines 99 and 191 form a disulfide. The helical transmembrane segment at 102–122 threads the bilayer; that stretch reads QEFFIHGFSVLESSVLLIMSF. The Cytoplasmic portion of the chain corresponds to 123–141; it reads DRFLAIHNPLRYTSILTTV. A helical transmembrane segment spans residues 142–162; sequence RVAQIGIVFSFKSMLLVLPFP. Residues 163–198 lie on the Extracellular side of the membrane; it reads FTLRSLRYCKKNQLSHSYCLHQDVMKLACSDNRIDV. A helical membrane pass occupies residues 199-218; the sequence is IYGFFGALCLMVDFILIAVS. At 219–238 the chain is on the cytoplasmic side; that stretch reads YTLILKTVPGIASKKEELKA. Residues 239-259 traverse the membrane as a helical segment; sequence LNTCVSHICAVIIFYLPIINL. Residues 260–274 are Extracellular-facing; sequence AVVHRFAGHVSPLIN. Residues 275–295 traverse the membrane as a helical segment; that stretch reads VLMANVLLLVPPLMKPIVYCV. Over 296–313 the chain is Cytoplasmic; sequence KTKQIRVRVVAKLCQWKI.

The protein belongs to the G-protein coupled receptor 1 family.

Its subcellular location is the cell membrane. Functionally, odorant receptor. The sequence is that of Olfactory receptor 51A2 (OR51A2) from Homo sapiens (Human).